The primary structure comprises 354 residues: Holliday junction branch migration complex subunit RuvB (354 aa).

Polar residues predominate over residues 1–10 (MAIKRNQGSN). Positions 1 to 36 (MAIKRNQGSNPKPEKKERLTKAETHQEQDNLEESIR) are disordered. A compositionally biased stretch (basic and acidic residues) spans 12 to 36 (KPEKKERLTKAETHQEQDNLEESIR). Residues 13-196 (PEKKERLTKA…FGLIQRLKFY (184 aa)) form a large ATPase domain (RuvB-L) region. Residues Ile35, Arg36, Gly77, Lys80, Thr81, Thr82, 143–145 (EDY), Arg186, Tyr196, and Arg233 contribute to the ATP site. Thr81 contributes to the Mg(2+) binding site. The small ATPAse domain (RuvB-S) stretch occupies residues 197 to 267 (EPEELALIIK…LAAEALDIYQ (71 aa)). The segment at 270-354 (PQGLDWTDRL…EEQLSIFSEQ (85 aa)) is head domain (RuvB-H). 2 residues coordinate DNA: Arg325 and Arg330.

The protein belongs to the RuvB family. As to quaternary structure, homohexamer. Forms an RuvA(8)-RuvB(12)-Holliday junction (HJ) complex. HJ DNA is sandwiched between 2 RuvA tetramers; dsDNA enters through RuvA and exits via RuvB. An RuvB hexamer assembles on each DNA strand where it exits the tetramer. Each RuvB hexamer is contacted by two RuvA subunits (via domain III) on 2 adjacent RuvB subunits; this complex drives branch migration. In the full resolvosome a probable DNA-RuvA(4)-RuvB(12)-RuvC(2) complex forms which resolves the HJ.

The protein localises to the cytoplasm. It catalyses the reaction ATP + H2O = ADP + phosphate + H(+). In terms of biological role, the RuvA-RuvB-RuvC complex processes Holliday junction (HJ) DNA during genetic recombination and DNA repair, while the RuvA-RuvB complex plays an important role in the rescue of blocked DNA replication forks via replication fork reversal (RFR). RuvA specifically binds to HJ cruciform DNA, conferring on it an open structure. The RuvB hexamer acts as an ATP-dependent pump, pulling dsDNA into and through the RuvAB complex. RuvB forms 2 homohexamers on either side of HJ DNA bound by 1 or 2 RuvA tetramers; 4 subunits per hexamer contact DNA at a time. Coordinated motions by a converter formed by DNA-disengaged RuvB subunits stimulates ATP hydrolysis and nucleotide exchange. Immobilization of the converter enables RuvB to convert the ATP-contained energy into a lever motion, pulling 2 nucleotides of DNA out of the RuvA tetramer per ATP hydrolyzed, thus driving DNA branch migration. The RuvB motors rotate together with the DNA substrate, which together with the progressing nucleotide cycle form the mechanistic basis for DNA recombination by continuous HJ branch migration. Branch migration allows RuvC to scan DNA until it finds its consensus sequence, where it cleaves and resolves cruciform DNA. The protein is Holliday junction branch migration complex subunit RuvB of Crocosphaera subtropica (strain ATCC 51142 / BH68) (Cyanothece sp. (strain ATCC 51142)).